Here is a 126-residue protein sequence, read N- to C-terminus: Small ribosomal subunit protein uS13c (126 aa).

The segment at G95–K126 is disordered. The segment covering A107–K126 has biased composition (basic residues).

This sequence belongs to the universal ribosomal protein uS13 family. As to quaternary structure, part of the 30S ribosomal subunit.

The protein resides in the plastid. Its subcellular location is the chloroplast. Functionally, located at the top of the head of the 30S subunit, it contacts several helices of the 16S rRNA. This chain is Small ribosomal subunit protein uS13c, found in Gracilaria tenuistipitata var. liui (Red alga).